Here is a 122-residue protein sequence, read N- to C-terminus: MGTKKPFRIKKTSDFQRVFAKHKSFANRYFVVYSDTQPKEVDVSHWRIGLSVSKKIGKAHERVWVKRRISESFNNISLFIPNNLDIVIVARPLVKGQKQKIIQDQLMHVLDLAGILNGKEKN.

The protein belongs to the RnpA family. As to quaternary structure, consists of a catalytic RNA component (M1 or rnpB) and a protein subunit.

The enzyme catalyses Endonucleolytic cleavage of RNA, removing 5'-extranucleotides from tRNA precursor.. RNaseP catalyzes the removal of the 5'-leader sequence from pre-tRNA to produce the mature 5'-terminus. It can also cleave other RNA substrates such as 4.5S RNA. The protein component plays an auxiliary but essential role in vivo by binding to the 5'-leader sequence and broadening the substrate specificity of the ribozyme. The protein is Ribonuclease P protein component of Oenococcus oeni (strain ATCC BAA-331 / PSU-1).